The primary structure comprises 1305 residues: Contactin-associated protein like 5-1 (1305 aa).

Residues 1-24 (MDSLQRLNGLLTLVLSALWHLGLT) form the signal peptide. The F5/8 type C domain maps to 25 to 174 (ASNYNCDDPL…IGMRVEAYGC (150 aa)). 2 Laminin G-like domains span residues 180 to 360 (VADF…TFSC) and 367 to 544 (PITF…IDLC). Asn282 is a glycosylation site (N-linked (GlcNAc...) asparagine). Residues Cys329 and Cys360 are joined by a disulfide bond. Asn496 carries N-linked (GlcNAc...) asparagine glycosylation. Disulfide bonds link Cys512-Cys544, Cys550-Cys561, and Cys555-Cys570. An EGF-like 1 domain is found at 546–583 (IKDRCLPNYCEHGGHCAQTWTTFYCNCSDTGYTGATCH). Asn571 carries N-linked (GlcNAc...) asparagine glycosylation. Residues Cys572 and Cys582 are joined by a disulfide bond. The Fibrinogen C-terminal domain maps to 584–790 (DSIYEQSCEV…LRCNGDRHFW (207 aa)). The N-linked (GlcNAc...) asparagine glycan is linked to Asn622. The region spanning 791–956 (NAVSFSTEAS…KLMSGVTPGC (166 aa)) is the Laminin G-like 3 domain. 4 disulfides stabilise this stretch: Cys929-Cys956, Cys960-Cys973, Cys967-Cys982, and Cys984-Cys994. An EGF-like 2 domain is found at 957-995 (PGHCSSYSSNCHNGGKCVEKQSGYSCDCTNSPNEGPFCQ). The region spanning 1014 to 1198 (EPYLVIKNTS…VHGTLTESGC (185 aa)) is the Laminin G-like 4 domain. Asn1057 is a glycosylation site (N-linked (GlcNAc...) asparagine). Cys1163 and Cys1198 form a disulfide bridge. Residues 1238-1258 (VIGGIIAVVTFVTFCVIGIMI) traverse the membrane as a helical segment.

The protein belongs to the neurexin family.

It is found in the membrane. May play a role in the correct development and proper functioning of the peripheral and central nervous system and be involved in cell adhesion and intercellular communication. This chain is Contactin-associated protein like 5-1 (Cntnap5a), found in Rattus norvegicus (Rat).